The chain runs to 319 residues: MLRYCLHRLLIGLGMLLALTILIFVLLQLTPGDPIDAYINPNVAMTQAEMDALRAQLGLDRPLPVQYLAWLGQAVQGNLGHSLQRFNETVSGLIASRIGPTLLLMAAGLAIAIVIGVTTGIISAVRRNSFPDYSFSVLALLGISSPAFLTALLGLYVFSVRLKWAPSGGMLTPATDFSIPDLLRHLALPALVLSIGHAALIMRYMRSSMLETLNQDYVRTARAKGVREFWVVVKHTLRNAMLPVVTLIGSTIGLAVGGAIFIESVFNWPGMGLLLINAVETRDYPVIMGATLVIGACVIIVNILTDLAYAVIDPRIKVT.

Transmembrane regions (helical) follow at residues 9–29, 102–122, 138–158, 182–202, 242–262, and 284–304; these read LLIGLGMLLALTILIFVLLQL, LLLMAAGLAIAIVIGVTTGII, LALLGISSPAFLTALLGLYVF, LLRHLALPALVLSIGHAALIM, LPVVTLIGSTIGLAVGGAIFI, and YPVIMGATLVIGACVIIVNIL. The region spanning 98 to 305 is the ABC transmembrane type-1 domain; that stretch reads IGPTLLLMAA…ACVIIVNILT (208 aa).

This sequence belongs to the binding-protein-dependent transport system permease family. In terms of assembly, the complex is composed of two ATP-binding proteins (BOV_A0347 and BOV_A0348), two transmembrane proteins (BOV_A0350 and BOV_A0351) and a solute-binding protein (BOV_A0352).

Its subcellular location is the cell inner membrane. Functionally, probably part of an ABC transporter complex that could be involved in peptide import. Probably responsible for the translocation of the substrate across the membrane. This chain is Putative peptide permease protein BOV_A0351, found in Brucella ovis (strain ATCC 25840 / 63/290 / NCTC 10512).